A 501-amino-acid chain; its full sequence is Glycerol kinase (501 aa).

Thr12 provides a ligand contact to ADP. Thr12, Thr13, and Ser14 together coordinate ATP. Thr12 serves as a coordination point for sn-glycerol 3-phosphate. An ADP-binding site is contributed by Arg16. 4 residues coordinate sn-glycerol 3-phosphate: Arg82, Glu83, Tyr134, and Asp244. Residues Arg82, Glu83, Tyr134, Asp244, and Gln245 each coordinate glycerol. 2 residues coordinate ADP: Thr266 and Gly310. Positions 266, 310, 314, and 411 each coordinate ATP. ADP-binding residues include Gly411 and Asn415.

This sequence belongs to the FGGY kinase family.

The enzyme catalyses glycerol + ATP = sn-glycerol 3-phosphate + ADP + H(+). The protein operates within polyol metabolism; glycerol degradation via glycerol kinase pathway; sn-glycerol 3-phosphate from glycerol: step 1/1. Its activity is regulated as follows. Inhibited by fructose 1,6-bisphosphate (FBP). Functionally, key enzyme in the regulation of glycerol uptake and metabolism. Catalyzes the phosphorylation of glycerol to yield sn-glycerol 3-phosphate. This Methylobacterium radiotolerans (strain ATCC 27329 / DSM 1819 / JCM 2831 / NBRC 15690 / NCIMB 10815 / 0-1) protein is Glycerol kinase.